We begin with the raw amino-acid sequence, 339 residues long: Dihydroorotate dehydrogenase (quinone) (339 aa).

FMN contacts are provided by residues 62–66 (AGMDK) and Thr86. Lys66 serves as a coordination point for substrate. Substrate is bound at residue 111–115 (NRMGF). Positions 139 and 172 each coordinate FMN. Residue Asn172 coordinates substrate. Catalysis depends on Ser175, which acts as the Nucleophile. Asn177 serves as a coordination point for substrate. Residues Lys217 and Thr245 each contribute to the FMN site. Residue 246 to 247 (NT) participates in substrate binding. FMN-binding positions include Gly268, Gly297, and 318–319 (YS).

This sequence belongs to the dihydroorotate dehydrogenase family. Type 2 subfamily. Monomer. It depends on FMN as a cofactor.

Its subcellular location is the cell membrane. The enzyme catalyses (S)-dihydroorotate + a quinone = orotate + a quinol. The protein operates within pyrimidine metabolism; UMP biosynthesis via de novo pathway; orotate from (S)-dihydroorotate (quinone route): step 1/1. Its function is as follows. Catalyzes the conversion of dihydroorotate to orotate with quinone as electron acceptor. The polypeptide is Dihydroorotate dehydrogenase (quinone) (Shewanella putrefaciens (strain CN-32 / ATCC BAA-453)).